The chain runs to 408 residues: Protein trichome birefringence-like 14 (408 aa).

The helical; Signal-anchor for type II membrane protein transmembrane segment at 11-31 (GSVSLALIVLILLVIILLVSE) threads the bilayer. The short motif at 131–133 (GDS) is the GDS motif element. The short motif at 387–401 (DCLHWCLPGIPDTWN) is the DCXHWCLPGXXDXWN motif element.

The protein belongs to the PC-esterase family. TBL subfamily.

It localises to the membrane. In terms of biological role, may act as a bridging protein that binds pectin and other cell wall polysaccharides. Probably involved in maintaining esterification of pectins. May be involved in the specific O-acetylation of cell wall polymers. This is Protein trichome birefringence-like 14 (TBL14) from Arabidopsis thaliana (Mouse-ear cress).